The sequence spans 294 residues: Probable 2-(5''-triphosphoribosyl)-3'-dephosphocoenzyme-A synthase (294 aa).

It belongs to the CitG/MdcB family.

It carries out the reaction 3'-dephospho-CoA + ATP = 2'-(5''-triphospho-alpha-D-ribosyl)-3'-dephospho-CoA + adenine. The chain is Probable 2-(5''-triphosphoribosyl)-3'-dephosphocoenzyme-A synthase from Streptococcus pyogenes serotype M5 (strain Manfredo).